Here is a 533-residue protein sequence, read N- to C-terminus: Beta-xylosidase (533 aa).

Asp14 functions as the Proton acceptor in the catalytic mechanism. Catalysis depends on Glu186, which acts as the Proton donor.

The protein belongs to the glycosyl hydrolase 43 family. Homodimer.

The protein localises to the cell membrane. The catalysed reaction is Hydrolysis of (1-&gt;4)-beta-D-xylans, to remove successive D-xylose residues from the non-reducing termini.. This Bacillus subtilis (strain 168) protein is Beta-xylosidase (xynB).